The chain runs to 441 residues: uncharacterized protein (441 aa).

217 to 224 (GETGTGKT) provides a ligand contact to ATP.

This sequence belongs to the GSP E family.

This is an uncharacterized protein from Bacillus anthracis.